Reading from the N-terminus, the 809-residue chain is MGKKRIMFFASLLLITIFLSFSYAGITRESPLSIGKTLSSSNGVYELGFFSFNNSQNQYVGIWFKGIIPRVVVWVANREKPVTDSAANLTISSNGSLLLFNENHSVVWSIGETFASNGSRAELTDNGNLVVIDNNSGRTLWESFEHFGDTMLPFSNLMYNLATGEKRVLTSWKSHTDPSPGDFTVQITPQVPSQACTMRGSKTYWRSGPWAKTRFTGIPVMDDTYTSPFSLQQDTNGSGSFTYFERNFKLSYIMITSEGSLKIFQHNGMDWELNFEAPENSCDIYGFCGPFGICVMSVPPKCKCFKGFVPKSIEEWKRGNWTDGCVRHTELHCQGNTNGKTVNGFYHVANIKPPDFYEFASFVDAEGCYQICLHNCSCLAFAYINGIGCLMWNQDLMDAVQFSAGGEILSIRLASSELGGNKRNKIIVASIVSLSLFVILAFAAFCFLRYKVKHTVSAKISKIASKEAWNNDLEPQDVSGLKFFEMNTIQTATDNFSLSNKLGQGGFGSVYKGKLQDGKEIAVKRLSSSSGQGKEEFMNEIVLISKLQHKNLVRILGCCIEGEERLLVYEFLLNKSLDTFLFDSRKRLEIDWPKRFNIIEGIARGLHYLHRDSCLRVIHRDLKVSNILLDEKMNPKISDFGLARMYQGTEYQDNTRRVAGTLGYMAPEYAWTGMFSEKSDIYSFGVILLEIITGEKISRFSYGRQGKTLLAYAWESWCESGGIDLLDKDVADSCHPLEVERCVQIGLLCVQHQPADRPNTMELLSMLTTTSDLTSPKQPTFVVHTRDEESLSQGLITVNEMTQSVILGR.

The N-terminal stretch at 1-24 (MGKKRIMFFASLLLITIFLSFSYA) is a signal peptide. Positions 25-144 (GITRESPLSI…NSGRTLWESF (120 aa)) constitute a Bulb-type lectin domain. At 25–425 (GITRESPLSI…SELGGNKRNK (401 aa)) the chain is on the extracellular side. N-linked (GlcNAc...) asparagine glycans are attached at residues N53, N88, N94, N103, N117, N134, and N236. Residues 278–314 (PENSCDIYGFCGPFGICVMSVPPKCKCFKGFVPKSIE) enclose the EGF-like domain. Cystine bridges form between C282-C294 and C288-C302. N-linked (GlcNAc...) asparagine glycans are attached at residues N320 and N375. One can recognise a PAN domain in the interval 333–415 (CQGNTNGKTV…GEILSIRLAS (83 aa)). Intrachain disulfides connect C368-C389 and C372-C378. Residues 426–446 (IIVASIVSLSLFVILAFAAFC) form a helical membrane-spanning segment. The Cytoplasmic portion of the chain corresponds to 447–809 (FLRYKVKHTV…EMTQSVILGR (363 aa)). The Protein kinase domain occupies 496-781 (FSLSNKLGQG…DLTSPKQPTF (286 aa)). Residues 502–510 (LGQGGFGSV) and K524 contribute to the ATP site. Phosphoserine occurs at positions 530 and 545. The segment at 585-602 (RKRLEIDWPKRFNIIEGI) is caM-binding. Residue D621 is the Proton acceptor of the active site. A phosphoserine mark is found at S625 and S638. T655 bears the Phosphothreonine mark. Phosphoserine occurs at positions 698 and 792.

Belongs to the protein kinase superfamily. Ser/Thr protein kinase family.

It localises to the cell membrane. The enzyme catalyses L-seryl-[protein] + ATP = O-phospho-L-seryl-[protein] + ADP + H(+). It catalyses the reaction L-threonyl-[protein] + ATP = O-phospho-L-threonyl-[protein] + ADP + H(+). The protein is G-type lectin S-receptor-like serine/threonine-protein kinase At1g61480 of Arabidopsis thaliana (Mouse-ear cress).